The primary structure comprises 305 residues: Zinc transporter ZIP9 (305 aa).

A helical membrane pass occupies residues 7 to 27 (ICLLSLAMLVACYVAGIIPLA). N29 is a glycosylation site (N-linked (GlcNAc...) asparagine). The next 5 membrane-spanning stretches (helical) occupy residues 35-55 (LKLV…AVIV), 104-124 (AYIG…DQIG), 144-164 (ITTT…LGAA), 174-194 (LIVF…LVSF), and 208-228 (HLLV…LGLS). N239 is a glycosylation site (N-linked (GlcNAc...) asparagine). The next 2 membrane-spanning stretches (helical) occupy residues 242–262 (GVAM…HVLP) and 284–304 (LEVA…IGHH).

The protein belongs to the ZIP transporter (TC 2.A.5) family.

The protein localises to the golgi apparatus. The protein resides in the trans-Golgi network membrane. It is found in the cell membrane. Its subcellular location is the cytoplasm. It localises to the perinuclear region. The protein localises to the mitochondrion. The protein resides in the nucleus. It carries out the reaction Zn(2+)(in) = Zn(2+)(out). Transports zinc ions across cell and organelle membranes into the cytoplasm and regulates intracellular zinc homeostasis. Participates in the zinc ions efflux out of the secretory compartments. Regulates intracellular zinc level, resulting in the enhancement of AKT1 and MAPK3/MAPK1 (Erk1/2) phosphorylation in response to the BCR activation. Also functions as a membrane androgen receptor that mediates, through a G protein, the non-classical androgen signaling pathway, characterized by the activation of MAPK3/MAPK1 (Erk1/2) and transcription factors CREB1 or ATF1. Moreover, has dual functions as a membrane-bound androgen receptor and as an androgen-dependent zinc transporter both of which are mediated through an inhibitory G protein (Gi) that mediates both MAP kinase and zinc signaling leading to the androgen-dependent apoptotic process. This is Zinc transporter ZIP9 from Gallus gallus (Chicken).